The primary structure comprises 354 residues: Prephenate dehydrogenase (354 aa).

In terms of domain architecture, Prephenate/arogenate dehydrogenase spans 2–283; sequence KKILIIGLGL…AMEIHKGALP (282 aa). 3–33 contacts NAD(+); sequence KILIIGLGLIGSSIALGIKKAHPEFEILGSD. One can recognise an ACT domain in the interval 287–354; that stretch reads DLFISVPDEK…IEKATDFTVV (68 aa).

It belongs to the prephenate/arogenate dehydrogenase family.

It carries out the reaction prephenate + NAD(+) = 3-(4-hydroxyphenyl)pyruvate + CO2 + NADH. Its pathway is amino-acid biosynthesis; L-tyrosine biosynthesis; (4-hydroxyphenyl)pyruvate from prephenate (NAD(+) route): step 1/1. The polypeptide is Prephenate dehydrogenase (tyrA) (Lactococcus lactis subsp. cremoris (strain MG1363)).